An 870-amino-acid polypeptide reads, in one-letter code: DNA polymerase kappa (870 aa).

Residues 103–358 (IVHIDMDAFY…LPIRKVSGIG (256 aa)) enclose the UmuC domain. Positions 107, 198, and 199 each coordinate Mg(2+). 2 UBZ4-type zinc fingers span residues 621-651 (ILTCPVCFRAQGCISLEALNKHVDECLDGPS) and 776-806 (ALVCPVCNVEQKTSDLTLFNVHVDVCLNKSF). Zn(2+)-binding residues include Cys624, Cys627, His642, Cys646, Cys779, Cys782, His797, and Cys801. Residues 816 to 858 (NPVNQPKESSRSTGSSSGVQKAVTRTKRPGLMTKYSTSKKIKP) are disordered.

The protein belongs to the DNA polymerase type-Y family. Interacts with REV1. Interacts with PCNA. Mg(2+) serves as cofactor. Requires Mn(2+) as cofactor. As to expression, detected at low levels in testis, spleen, prostate and ovary. Detected at very low levels in kidney, colon, brain, heart, liver, lung, placenta, pancreas and peripheral blood leukocytes.

The protein resides in the nucleus. The enzyme catalyses DNA(n) + a 2'-deoxyribonucleoside 5'-triphosphate = DNA(n+1) + diphosphate. Functionally, DNA polymerase specifically involved in DNA repair. Plays an important role in translesion synthesis, where the normal high-fidelity DNA polymerases cannot proceed and DNA synthesis stalls. Depending on the context, it inserts the correct base, but causes frequent base transitions, transversions and frameshifts. Lacks 3'-5' proofreading exonuclease activity. Forms a Schiff base with 5'-deoxyribose phosphate at abasic sites, but does not have lyase activity. This chain is DNA polymerase kappa (POLK), found in Homo sapiens (Human).